The following is a 766-amino-acid chain: Protein STB6 (766 aa).

The segment at Val447 to Ser469 is disordered. Ser514 carries the phosphoserine modification.

The protein to yeast STB2.

In terms of biological role, binds to SIN3. This Saccharomyces cerevisiae (strain ATCC 204508 / S288c) (Baker's yeast) protein is Protein STB6 (STB6).